Consider the following 63-residue polypeptide: Large ribosomal subunit protein bL35 (63 aa).

It belongs to the bacterial ribosomal protein bL35 family.

This chain is Large ribosomal subunit protein bL35, found in Campylobacter curvus (strain 525.92).